A 148-amino-acid polypeptide reads, in one-letter code: NADPH-dependent 7-cyano-7-deazaguanine reductase (148 aa).

The active-site Thioimide intermediate is cysteine 50. Aspartate 57 (proton donor) is an active-site residue. Substrate is bound by residues valine 72–serine 74 and histidine 91–glutamate 92.

It belongs to the GTP cyclohydrolase I family. QueF type 1 subfamily.

It is found in the cytoplasm. It carries out the reaction 7-aminomethyl-7-carbaguanine + 2 NADP(+) = 7-cyano-7-deazaguanine + 2 NADPH + 3 H(+). It functions in the pathway tRNA modification; tRNA-queuosine biosynthesis. Its function is as follows. Catalyzes the NADPH-dependent reduction of 7-cyano-7-deazaguanine (preQ0) to 7-aminomethyl-7-deazaguanine (preQ1). This Helicobacter acinonychis (strain Sheeba) protein is NADPH-dependent 7-cyano-7-deazaguanine reductase.